Reading from the N-terminus, the 187-residue chain is Adenylate kinase (187 aa).

10–15 (GSGKGT) serves as a coordination point for ATP. The segment at 30 to 59 (STGDLLRAEVAAGSPLGLKAKEVMARGDLV) is NMP. Residues Thr-31, Arg-36, 57–59 (DLV), 85–88 (GYPR), and Gln-92 each bind AMP. Residues 126-136 (GRAKAEGREDD) form an LID region. Arg-127 is a binding site for ATP. AMP is bound by residues Arg-133 and Arg-144. ATP is bound at residue Gly-172.

The protein belongs to the adenylate kinase family. Monomer.

It is found in the cytoplasm. It catalyses the reaction AMP + ATP = 2 ADP. Its pathway is purine metabolism; AMP biosynthesis via salvage pathway; AMP from ADP: step 1/1. Functionally, catalyzes the reversible transfer of the terminal phosphate group between ATP and AMP. Plays an important role in cellular energy homeostasis and in adenine nucleotide metabolism. The protein is Adenylate kinase of Xanthomonas axonopodis pv. citri (strain 306).